The following is a 320-amino-acid chain: Phosphoribosylaminoimidazole-succinocarboxamide synthase (320 aa).

Positions 283 to 303 are disordered; sequence ESDWDRNSPPPPLPESIAHQT.

This sequence belongs to the SAICAR synthetase family.

The catalysed reaction is 5-amino-1-(5-phospho-D-ribosyl)imidazole-4-carboxylate + L-aspartate + ATP = (2S)-2-[5-amino-1-(5-phospho-beta-D-ribosyl)imidazole-4-carboxamido]succinate + ADP + phosphate + 2 H(+). It functions in the pathway purine metabolism; IMP biosynthesis via de novo pathway; 5-amino-1-(5-phospho-D-ribosyl)imidazole-4-carboxamide from 5-amino-1-(5-phospho-D-ribosyl)imidazole-4-carboxylate: step 1/2. This Rhodopirellula baltica (strain DSM 10527 / NCIMB 13988 / SH1) protein is Phosphoribosylaminoimidazole-succinocarboxamide synthase.